A 464-amino-acid chain; its full sequence is Glutamate--tRNA ligase (464 aa).

The 'HIGH' region signature appears at P10 to G20. Over residues Q113–A130 the composition is skewed to basic and acidic residues. Residues Q113–P142 are disordered. The short motif at K242 to R246 is the 'KMSKS' region element. An ATP-binding site is contributed by K245.

The protein belongs to the class-I aminoacyl-tRNA synthetase family. Glutamate--tRNA ligase type 1 subfamily. In terms of assembly, monomer.

The protein localises to the cytoplasm. It catalyses the reaction tRNA(Glu) + L-glutamate + ATP = L-glutamyl-tRNA(Glu) + AMP + diphosphate. Functionally, catalyzes the attachment of glutamate to tRNA(Glu) in a two-step reaction: glutamate is first activated by ATP to form Glu-AMP and then transferred to the acceptor end of tRNA(Glu). This chain is Glutamate--tRNA ligase, found in Dechloromonas aromatica (strain RCB).